The sequence spans 137 residues: uncharacterized protein (137 aa).

Residues 111–131 (LAVGVLVGSNLVVGSLVFALL) form a helical membrane-spanning segment.

It is found in the membrane. This is an uncharacterized protein from Saccharomyces cerevisiae (strain ATCC 204508 / S288c) (Baker's yeast).